A 161-amino-acid chain; its full sequence is Small ribosomal subunit protein uS19 (161 aa).

Positions 1 to 19 (MARQKKYSGKGGARKKNKQ) are enriched in basic residues. A disordered region spans residues 1 to 26 (MARQKKYSGKGGARKKNKQKQSVAPR).

It belongs to the universal ribosomal protein uS19 family.

Its function is as follows. Protein S19 forms a complex with S13 that binds strongly to the 16S ribosomal RNA. In Methanococcus maripaludis (strain C7 / ATCC BAA-1331), this protein is Small ribosomal subunit protein uS19.